The chain runs to 402 residues: tRNA(Met) cytidine acetate ligase (402 aa).

Residues 7 to 20 (ITEYNPFHLGHELH), G102, N171, and R196 contribute to the ATP site.

Belongs to the TmcAL family.

Its subcellular location is the cytoplasm. It catalyses the reaction cytidine(34) in elongator tRNA(Met) + acetate + ATP = N(4)-acetylcytidine(34) in elongator tRNA(Met) + AMP + diphosphate. Its function is as follows. Catalyzes the formation of N(4)-acetylcytidine (ac(4)C) at the wobble position of elongator tRNA(Met), using acetate and ATP as substrates. First activates an acetate ion to form acetyladenylate (Ac-AMP) and then transfers the acetyl group to tRNA to form ac(4)C34. The protein is tRNA(Met) cytidine acetate ligase of Clostridium perfringens (strain SM101 / Type A).